Consider the following 238-residue polypeptide: MVTSEGLASVDSWLYRQGFNVDSWLLSDTFSHDNDLLARALHTTVTAPHTLTPSSAFFDSSAVSHPSSTNTLSSTVSGASDPEIIGGGAKRKRNCLLTDGKAAKRRARASKKSQTTFITADPSNFRQMVQQVTGAKYIDDSSSFGIFDPIVKPEPLRFVNKLPCGPSDRSTAVPMLDTSAFLSNHHQENLAVGNAFSGNSSSVGLPSGKPSATADPGGSAVEFDNYPTFPTLESWKVM.

Residues S68 to G78 are compositionally biased toward polar residues. The disordered stretch occupies residues S68–G87. A Bipartite nuclear localization signal motif is present at residues K92–R108. The short motif at F125–G134 is the VQ element. The interval S201–A220 is disordered.

Interacts with calmodulin (CaM). Interacts with WRKY25 and WRKY51. In terms of tissue distribution, expressed in leaves, flowers and siliques.

It is found in the nucleus. In terms of biological role, calmodulin-binding protein that functions as a negative regulator of osmotic stress tolerance. The protein is Calmodulin-binding protein 25 of Arabidopsis thaliana (Mouse-ear cress).